Reading from the N-terminus, the 526-residue chain is Lysine--tRNA ligase (526 aa).

Mg(2+) is bound by residues glutamate 431 and glutamate 438.

The protein belongs to the class-II aminoacyl-tRNA synthetase family. In terms of assembly, homodimer. The cofactor is Mg(2+).

It is found in the cytoplasm. It catalyses the reaction tRNA(Lys) + L-lysine + ATP = L-lysyl-tRNA(Lys) + AMP + diphosphate. The polypeptide is Lysine--tRNA ligase (Chlamydia trachomatis serovar L2b (strain UCH-1/proctitis)).